A 225-amino-acid chain; its full sequence is MARSIIAVLPAAGVGSRMQADKPKQYLTLLGKTLLEHTLDVMLSYPAVSKIILAVSKDDPYISTLSLDPKIQLVEGGTTRAESVLNGLNAIAEKNAWVLVHDAARPCLQHADIDKLLAIEDKQGAILAIPVTDTIKRADNQQCIVKTEDRSQLWQAMTPQFFPVDILRDALSTGIQQGANITDEASAIELAGFRPHLVAGRSDNLKVTRPEDLALAEFYLTRNKL.

Belongs to the IspD/TarI cytidylyltransferase family. IspD subfamily.

It carries out the reaction 2-C-methyl-D-erythritol 4-phosphate + CTP + H(+) = 4-CDP-2-C-methyl-D-erythritol + diphosphate. It participates in isoprenoid biosynthesis; isopentenyl diphosphate biosynthesis via DXP pathway; isopentenyl diphosphate from 1-deoxy-D-xylulose 5-phosphate: step 2/6. In terms of biological role, catalyzes the formation of 4-diphosphocytidyl-2-C-methyl-D-erythritol from CTP and 2-C-methyl-D-erythritol 4-phosphate (MEP). The chain is 2-C-methyl-D-erythritol 4-phosphate cytidylyltransferase from Haemophilus influenzae (strain PittGG).